The sequence spans 132 residues: Galectin-2 (132 aa).

The Galectin domain occupies 4 to 131 (ELEVKNMDMK…GFNMSSFKLK (128 aa)). Residue 65-71 (WGQEQRE) participates in a beta-D-galactoside binding.

In terms of assembly, homodimer.

Functionally, this protein binds beta-galactoside. Its physiological function is not yet known. The chain is Galectin-2 (LGALS2) from Homo sapiens (Human).